The following is a 516-amino-acid chain: Cytochrome P450 1A2 (516 aa).

Residue Ser-69 is glycosylated (O-linked (GlcNAc) serine). Phe-226 is a substrate binding site. Cys-458 lines the heme pocket.

It belongs to the cytochrome P450 family. In terms of assembly, interacts with PGRMC1; the interaction requires PGRMC1 homodimerization. It depends on heme as a cofactor. As to expression, liver.

Its subcellular location is the endoplasmic reticulum membrane. The protein localises to the microsome membrane. The catalysed reaction is an organic molecule + reduced [NADPH--hemoprotein reductase] + O2 = an alcohol + oxidized [NADPH--hemoprotein reductase] + H2O + H(+). It carries out the reaction 17beta-estradiol + reduced [NADPH--hemoprotein reductase] + O2 = 2-hydroxy-17beta-estradiol + oxidized [NADPH--hemoprotein reductase] + H2O + H(+). The enzyme catalyses 17beta-estradiol + reduced [NADPH--hemoprotein reductase] + O2 = 4-hydroxy-17beta-estradiol + oxidized [NADPH--hemoprotein reductase] + H2O + H(+). It catalyses the reaction estrone + reduced [NADPH--hemoprotein reductase] + O2 = 2-hydroxyestrone + oxidized [NADPH--hemoprotein reductase] + H2O + H(+). The catalysed reaction is estrone + reduced [NADPH--hemoprotein reductase] + O2 = 4-hydroxyestrone + oxidized [NADPH--hemoprotein reductase] + H2O + H(+). It carries out the reaction cholesterol + reduced [NADPH--hemoprotein reductase] + O2 = 25-hydroxycholesterol + oxidized [NADPH--hemoprotein reductase] + H2O + H(+). The enzyme catalyses all-trans-retinol + reduced [NADPH--hemoprotein reductase] + O2 = all-trans-retinal + oxidized [NADPH--hemoprotein reductase] + 2 H2O + H(+). It catalyses the reaction all-trans-retinal + reduced [NADPH--hemoprotein reductase] + O2 = all-trans-retinoate + oxidized [NADPH--hemoprotein reductase] + H2O + 2 H(+). The catalysed reaction is (5Z,8Z,11Z,14Z)-eicosatetraenoate + reduced [NADPH--hemoprotein reductase] + O2 = (14R,15S)-epoxy-(5Z,8Z,11Z)-eicosatrienoate + oxidized [NADPH--hemoprotein reductase] + H2O + H(+). It carries out the reaction (5Z,8Z,11Z,14Z)-eicosatetraenoate + reduced [NADPH--hemoprotein reductase] + O2 = (14S,15R)-epoxy-(5Z,8Z,11Z)-eicosatrienoate + oxidized [NADPH--hemoprotein reductase] + H2O + H(+). The enzyme catalyses (5Z,8Z,11Z,14Z,17Z)-eicosapentaenoate + reduced [NADPH--hemoprotein reductase] + O2 = (17R,18S)-epoxy-(5Z,8Z,11Z,14Z)-eicosatetraenoate + oxidized [NADPH--hemoprotein reductase] + H2O + H(+). It catalyses the reaction (4Z,7Z,10Z,13Z,16Z,19Z)-docosahexaenoate + reduced [NADPH--hemoprotein reductase] + O2 = (19R,20S)-epoxy-(4Z,7Z,10Z,13Z,16Z)-docosapentaenoate + oxidized [NADPH--hemoprotein reductase] + H2O + H(+). The catalysed reaction is (5S)-hydroperoxy-(6E,8Z,11Z,14Z)-eicosatetraenoate = 5-oxo-(6E,8Z,11Z,14Z)-eicosatetraenoate + H2O. It carries out the reaction (12S)-hydroperoxy-(5Z,8Z,10E,14Z)-eicosatetraenoate = 12-oxo-(5Z,8Z,10E,14Z)-eicosatetraenoate + H2O. The enzyme catalyses (15S)-hydroperoxy-(5Z,8Z,11Z,13E)-eicosatetraenoate = 15-oxo-(5Z,8Z,11Z,13E)-eicosatetraenoate + H2O. It catalyses the reaction (13S)-hydroperoxy-(9Z,11E)-octadecadienoate = 13-oxo-(9Z,11E)-octadecadienoate + H2O. The catalysed reaction is (5Z,8Z,11Z,14Z)-eicosatetraenoate + reduced [NADPH--hemoprotein reductase] + O2 = 13-hydroxy-(5Z,8Z,11Z,14Z)-eicosatetraenoate + oxidized [NADPH--hemoprotein reductase] + H2O + H(+). It carries out the reaction (5Z,8Z,11Z,14Z)-eicosatetraenoate + reduced [NADPH--hemoprotein reductase] + O2 = 19-hydroxy-(5Z,8Z,11Z,14Z)-eicosatetraenoate + oxidized [NADPH--hemoprotein reductase] + H2O + H(+). The enzyme catalyses (9Z,12Z)-octadecadienoate + reduced [NADPH--hemoprotein reductase] + O2 = 11-hydroxy-(9Z,12Z)-octadecadienoate + oxidized [NADPH--hemoprotein reductase] + H2O + H(+). It participates in cofactor metabolism; retinol metabolism. The protein operates within steroid metabolism; cholesterol metabolism. Its pathway is lipid metabolism; arachidonate metabolism. Functionally, a cytochrome P450 monooxygenase involved in the metabolism of various endogenous substrates, including fatty acids, steroid hormones and vitamins. Mechanistically, uses molecular oxygen inserting one oxygen atom into a substrate, and reducing the second into a water molecule, with two electrons provided by NADPH via cytochrome P450 reductase (NADPH--hemoprotein reductase). Catalyzes the hydroxylation of carbon-hydrogen bonds. Exhibits high catalytic activity for the formation of hydroxyestrogens from estrone (E1) and 17beta-estradiol (E2), namely 2-hydroxy E1 and E2. Metabolizes cholesterol toward 25-hydroxycholesterol, a physiological regulator of cellular cholesterol homeostasis. May act as a major enzyme for all-trans retinoic acid biosynthesis in the liver. Catalyzes two successive oxidative transformation of all-trans retinol to all-trans retinal and then to the active form all-trans retinoic acid. Primarily catalyzes stereoselective epoxidation of the last double bond of polyunsaturated fatty acids (PUFA), displaying a strong preference for the (R,S) stereoisomer. Catalyzes bisallylic hydroxylation and omega-1 hydroxylation of PUFA. May also participate in eicosanoids metabolism by converting hydroperoxide species into oxo metabolites (lipoxygenase-like reaction, NADPH-independent). Plays a role in the oxidative metabolism of xenobiotics. Catalyzes the N-hydroxylation of heterocyclic amines and the O-deethylation of phenacetin. Metabolizes caffeine via N3-demethylation. This Homo sapiens (Human) protein is Cytochrome P450 1A2.